The chain runs to 329 residues: Terpene synthase 7 (329 aa).

Positions 99-104 (DDLYLE) match the DDxx(x)D/E motif motif. The NDxxSxxxD/E motif signature appears at 230-238 (NDIHSFNKE).

It belongs to the terpene synthase family.

Terpene synthase that converts its substrate farnesyl diphosphate (FPP) into 6 yet unidentified sesquiterpenes. This Dictyostelium purpureum (Slime mold) protein is Terpene synthase 7.